The chain runs to 331 residues: Very-long-chain 3-oxoacyl-CoA reductase (331 aa).

A helical membrane pass occupies residues 15–35; it reads VQWALAGVGALYISAKVLSYL. NADP(+) contacts are provided by V60, D115, D123, N142, Y209, K213, I242, and S244. Y209 (proton donor) is an active-site residue. Catalysis depends on K213, which acts as the Lowers pKa of active site Tyr.

The protein belongs to the short-chain dehydrogenases/reductases (SDR) family.

It localises to the endoplasmic reticulum membrane. The catalysed reaction is a very-long-chain (3R)-3-hydroxyacyl-CoA + NADP(+) = a very-long-chain 3-oxoacyl-CoA + NADPH + H(+). Its pathway is lipid metabolism; fatty acid biosynthesis. Its function is as follows. Component of the microsomal membrane bound fatty acid elongation system, which produces the 26-carbon very long-chain fatty acids (VLCFA) from palmitate. Catalyzes the reduction of the 3-ketoacyl-CoA intermediate that is formed in each cycle of fatty acid elongation. VLCFAs serve as precursors for ceramide and sphingolipids. This chain is Very-long-chain 3-oxoacyl-CoA reductase, found in Pyricularia oryzae (strain 70-15 / ATCC MYA-4617 / FGSC 8958) (Rice blast fungus).